Consider the following 2527-residue polypeptide: Neurogenic locus notch homolog protein 1 (2527 aa).

The first 36 residues, 1–36, serve as a signal peptide directing secretion; the sequence is MGRSDSRAGALLEGGCEQNIDPRRAAHCHHPRLATS. At 37–1741 the chain is on the extracellular side; it reads SLRCSQPSGT…VEPPLPSQLH (1705 aa). Disulfide bonds link C40/C53, C47/C62, C64/C73, C79/C90, C84/C103, C105/C114, C122/C133, C127/C143, C145/C154, C160/C171, C165/C180, C182/C191, C198/C211, C205/C220, C222/C231, C238/C249, C243/C259, C261/C270, C277/C288, C282/C297, C299/C308, C315/C328, C322/C337, C339/C348, C355/C366, C360/C375, C377/C386, C392/C403, C397/C414, C416/C425, C432/C445, C439/C454, and C456/C465. N57 carries N-linked (GlcNAc...) asparagine glycosylation. 3 consecutive EGF-like domains span residues 75 to 115, 118 to 155, and 156 to 192; these read DPNP…PLCL, LDNACLANPCRNGGTCDLLTLTEYKCRCPPGWSGKSCQ, and QADPCASNPCANGGQCLPFESSYICGCPPGFHGPTCR. S81 is a glycosylation site (O-linked (Glc...) serine). A glycan (O-linked (Fuc...) threonine) is linked at T89. O-linked (Fuc...) threonine glycosylation is present at T132. S162 is a glycosylation site (O-linked (Glc...) serine). The 39-residue stretch at 194–232 folds into the EGF-like 4; calcium-binding domain; that stretch reads DVNECSQNPGLCRHGGTCHNEIGSYRCVCRATHTGPHCE. The O-linked (Fuc...) threonine glycan is linked to T210. Residues 234–271 enclose the EGF-like 5 domain; that stretch reads PYVPCSPSPCQNGGTCRPTGDTTHECACLPGFAGQNCE. Residue T248 is glycosylated (O-linked (Fuc...) threonine; alternate). O-linked (GalNAc...) threonine; alternate glycosylation occurs at T248. The 37-residue stretch at 273-309 folds into the EGF-like 6; calcium-binding domain; it reads NVDDCPGNNCKNGGACVDGVNTYNCRCPPEWTGQYCT. Residues 311–349 enclose the EGF-like 7; calcium-binding domain; it reads DVDECQLMPNACQNGGTCHNTHGGYNCVCVNGWTGEDCS. A glycan (O-linked (Fuc...) threonine) is linked at T327. In terms of domain architecture, EGF-like 8; calcium-binding spans 351–387; sequence NIDDCASAACFQGATCHDRVASFYCECPHGRTGLLCH. An O-linked (Glc...) serine glycan is attached at S357. T365 carries O-linked (Fuc...) threonine glycosylation. The EGF-like 9 domain occupies 388 to 426; that stretch reads LNDACISNPCNEGSNCDTNPVNGKAICTCPSGYTGPACS. O-linked (Glc...) serine glycosylation is present at S394. The EGF-like 10; calcium-binding domain occupies 428 to 466; that stretch reads DVDECALGANPCEHAGKCLNTLGSFECQCLQGYTGPRCE. Positions 436–437 are interaction with DLL4; sequence AN. Residues T448 and S451 each contribute to the Ca(2+) site. The O-linked (Glc...) serine glycan is linked to S451. The segment at 464–468 is interaction with DLL4; it reads RCEID. Residues D468, V469, and E471 each coordinate Ca(2+). The EGF-like 11; calcium-binding domain occupies 468 to 504; that stretch reads DVNECISNPCQNDATCLDQIGEFQCICMPGYEGVYCE. Cystine bridges form between C472–C483, C477–C492, and C494–C503. O-linked (Glc...) serine glycosylation is present at S474. T482 carries an O-linked (Fuc...) threonine glycan. Ca(2+)-binding residues include D485 and Q486. Ca(2+) is bound by residues N506, T507, and E509. The EGF-like 12; calcium-binding domain occupies 506 to 542; the sequence is NTDECASSPCLHNGHCMDKINEFLCQCPKGFSGHLCQ. 28 cysteine pairs are disulfide-bonded: C510–C521, C515–C530, C532–C541, C548–C559, C553–C568, C570–C579, C586–C596, C591–C605, C607–C616, C623–C634, C628–C643, C645–C654, C661–C671, C666–C680, C682–C691, C698–C709, C703–C718, C720–C729, C736–C746, C741–C755, C757–C766, C773–C784, C778–C793, C795–C804, C811–C822, C816–C831, C833–C842, and C849–C860. Residue S512 is glycosylated (O-linked (Glc...) serine). 2 residues coordinate Ca(2+): D523 and K524. Positions 544 to 580 constitute an EGF-like 13; calcium-binding domain; that stretch reads DVDECASTPCKNGAKCLDGPNTYTCVCTEGYTGTHCE. O-linked (Glc...) serine glycosylation occurs at S550. An EGF-like 14; calcium-binding domain is found at 582 to 617; that stretch reads DIDECDPDPCHYGFCKDGVATFTCLCQPGYTGHHCE. The EGF-like 15; calcium-binding domain maps to 619–655; the sequence is NINECHSQPCRHGGTCQDRDNSYLCLCLKGTTGPNCE. O-linked (Glc...) serine glycosylation occurs at S625. O-linked (Fuc...) threonine glycosylation is present at T633. The EGF-like 16; calcium-binding domain maps to 657–692; that stretch reads NLDDCASNPCDSGTCLDKIDGYECACEPGYTGSMCN. A glycan (O-linked (Glc...) serine) is linked at S663. Positions 694–730 constitute an EGF-like 17; calcium-binding domain; that stretch reads NIDECAGSPCHNGGTCEDGIAGFTCRCPEGYHDPTCL. O-linked (Fuc...) threonine glycosylation is present at T708. One can recognise an EGF-like 18; calcium-binding domain in the interval 732 to 767; it reads EVNECNSNPCIHGACRDGLNGYKCDCAPGWSGTNCD. Residue S738 is glycosylated (O-linked (Glc...) serine). An EGF-like 19 domain is found at 769 to 805; the sequence is NNNECESNPCVNGGTCKDMTSGYVCTCREGFSGPNCQ. S775 carries an O-linked (Glc...) serine glycan. T783 is a glycosylation site (O-linked (Fuc...) threonine). S800 is a glycosylation site (O-linked (GlcNAc) serine). The EGF-like 20; calcium-binding domain occupies 807–843; the sequence is NINECASNPCLNQGTCIDDVAGYKCNCPLPYTGATCE. S813 carries O-linked (Glc...) serine glycosylation. A glycan (O-linked (Fuc...) threonine) is linked at T821. An EGF-like 21 domain is found at 845 to 883; sequence VLAPCATSPCKNSGVCKESEDYESFSCVCPTGWQGQTCE. The 37-residue stretch at 885–921 folds into the EGF-like 22; calcium-binding domain; the sequence is DINECVKSPCRHGASCQNTNGSYRCLCQAGYTGRNCE. N904 carries N-linked (GlcNAc...) asparagine glycosylation. O-linked (GlcNAc) threonine glycosylation occurs at T916. The EGF-like 23 domain occupies 923-959; that stretch reads DIDDCRPNPCHNGGSCTDGINMAFCDCLPGFQGAFCE. A glycan (O-linked (Fuc) serine) is linked at S937. Residues 961-997 enclose the EGF-like 24; calcium-binding domain; sequence DINECASNPCRNGANCTDCVDSYTCTCPAGFNGIHCE. O-linked (Glc...) serine glycosylation occurs at S967. A glycan (N-linked (GlcNAc...) asparagine) is linked at N975. 5 consecutive EGF-like domains span residues 999–1035, 1037–1073, 1075–1111, 1113–1159, and 1161–1197; these read NTPDCTESSCFNGGTCVDGINSFTCLCPPGFTGSYCQ, DVNECDSRPCLHGGTCQDSYGTYKCTCPQGYTGLNCQ, LVHWCDSAPCKNGGKCWQTNTQYHCECRSGWTGFNCD, LSVS…SYCE, and EVDECSPNPCQNGATCTDYLGGFSCKCVAGYHGSNCS. T1013 carries O-linked (Fuc...) threonine glycosylation. S1043 is a glycosylation site (O-linked (Glc...) serine). O-linked (Fuc...) threonine glycosylation occurs at T1051. A glycan (O-linked (Glc...) serine) is linked at S1081. Residues C1117 and C1138 are joined by a disulfide bond. The O-linked (Fuc...) threonine glycan is linked to T1175. Residue N1195 is glycosylated (N-linked (GlcNAc...) asparagine). An EGF-like 30; calcium-binding domain is found at 1199–1235; the sequence is EINECLSQPCQNGGTCIDLTNTYKCSCPRGTQGVHCE. A glycan (O-linked (Glc...) serine) is linked at S1205. O-linked (Fuc...) threonine glycosylation is present at T1213. Residues 1237–1281 enclose the EGF-like 31; calcium-binding domain; it reads NVDDCHPHLDPASRSPKCFNNGTCVDQVGGYSCTCPPGFVGERCE. An N-linked (GlcNAc...) asparagine glycan is attached at N1257. EGF-like domains are found at residues 1283–1321, 1323–1362, 1364–1400, and 1403–1442; these read DINECLSNPCDPRGTQDCVQRVNDFHCECRAGHTGRRCE, VINGCRGKPCKNGGVCAVASNTARGFICRCPAGFEGATCE, DARTCGSLRCLNGGTCISGPRSPTCLCLGSFTGPECQ, and ASSPCVGSNPCYNQGTCEPTSESPFYRCLCPAKFNGLLCH. Residue S1289 is glycosylated (O-linked (Glc...) serine). Residue T1378 is glycosylated (O-linked (Fuc...) threonine). The O-linked (GlcNAc...) threonine glycan is linked to T1395. O-linked (Fuc...) threonine; alternate glycosylation occurs at T1418. An O-linked (GalNAc...) threonine; alternate glycan is attached at T1418. LNR repeat units follow at residues 1465–1505, 1506–1547, and 1548–1587; these read CELP…PWKN, CTQS…CNPL, and YDQYCKDHFSDGHCDQGCNSAECDWDGLDCADHVPERLAA. The Ca(2+) site is built by D1473, N1476, D1491, and D1494. N1505 carries an N-linked (GlcNAc...) asparagine glycan. N-linked (GlcNAc...) asparagine glycosylation occurs at N1603. The O-linked (GalNAc...) threonine glycan is linked to T1731. An interaction with PSEN1 region spans residues 1734–1766; the sequence is PPLPSQLHLMYLAAAAFVLLFFVGCGVLLSRKR. The helical transmembrane segment at 1742 to 1762 threads the bilayer; the sequence is LMYLAAAAFVLLFFVGCGVLL. Residues 1763–2527 are Cytoplasmic-facing; the sequence is SRKRRRQHGQ…QITHIPEAFK (765 aa). A Glycyl lysine isopeptide (Lys-Gly) (interchain with G-Cter in ubiquitin) cross-link involves residue K1765. Residues 1786-1814 are disordered; that stretch reads KKKRREPLGEDSVGLKPLKNASDGALMDD. T1867 is modified (phosphothreonine). 5 ANK repeats span residues 1933-1962, 1966-1996, 2000-2029, 2033-2062, and 2066-2095; these read TGETALHLAARYSRSDAAKRLLEASADANI, MGRTPLHAAVSADAQGVFQILLRNRATDLDA, DGTTPLILAARLAVEGMLEDLINSHADVNA, LGKSALHWAAAVNNVDAAVVLLKNGANKDM, and KEETPLFLAAREGSYETAKVLLDHFANRDI. The HIF1AN-binding stretch occupies residues 1953 to 1961; the sequence is LLEASADAN. The residue at position 1961 (N1961) is a (3S)-3-hydroxyasparagine; by HIF1AN; partial. The segment at 2020–2028 is HIF1AN-binding; it reads LINSHADVN. N2028 is subject to (3S)-3-hydroxyasparagine; by HIF1AN. Disordered regions lie at residues 2157–2201, 2378–2424, and 2436–2527; these read SATQ…DSSS, QPQN…SLPV, and PTSL…EAFK. Low complexity predominate over residues 2378 to 2391; sequence QPQNLQPPSQPHLS. Over residues 2436-2474 the composition is skewed to polar residues; sequence PTSLPSSMVPPMTTTQFLTPPSQHSYSSSPVDNTPSHQL. The span at 2484-2499 shows a compositional bias: low complexity; the sequence is PSPESPDQWSSSSPHS. Residues 2500–2520 show a composition bias toward polar residues; it reads NISDWSEGISSPPTSMPSQIT.

The protein belongs to the NOTCH family. As to quaternary structure, heterodimer of a C-terminal fragment N(TM) and an N-terminal fragment N(EC) which are probably linked by disulfide bonds. Interacts with DNER, DTX1, DTX2 and RBPJ/RBPSUH. Also interacts with MAML1, MAML2 and MAML3 which act as transcriptional coactivators for NOTCH1. Notch 1 intracellular domain interacts with SNW1; the interaction involves multimerized NOTCH1 NICD and is implicated in a formation of an intermediate preactivation complex which associates with DNA-bound CBF-1/RBPJ. The activated membrane-bound form interacts with AAK1 which promotes NOTCH1 stabilization. Forms a trimeric complex with FBXW7 and SGK1. Interacts with HIF1AN. HIF1AN negatively regulates the function of notch intracellular domain (NICD), accelerating myogenic differentiation. Interacts (via NICD) with SNAI1 (via zinc fingers); the interaction induces SNAI1 degradation via MDM2-mediated ubiquitination and inhibits SNAI1-induced cell invasion. Interacts (via NICD) with MDM2A. Interacts (via NICD) with BCL6; the interaction decreases MAML1 recruitment by NOTCH1 NICD on target genes DNA and inhibits NOTCH1 transactivation activity. Interacts with THBS4. Interacts (via the EGF-like repeat region) with CCN3 (via CTCK domain). Interacts (via EGF-like domains) with DLL4 (via N-terminal DSL and MNNL domains). Interacts with ZMIZ1. Interacts (via NICD domain) with MEGF10 (via the cytoplasmic domain). Interacts with DLL1 and JAG1. Interacts (via NICD domain) with PRAG1. Forms a complex with PRAG1, N1ICD and MAML1, in a MAML1-dependent manner. Interacts (via transmembrane region) with PSEN1; the interaction is direct. Interacts with ZFP64. Synthesized in the endoplasmic reticulum as an inactive form which is proteolytically cleaved by a furin-like convertase in the trans-Golgi network before it reaches the plasma membrane to yield an active, ligand-accessible form. Cleavage results in a C-terminal fragment N(TM) and a N-terminal fragment N(EC). Following ligand binding, it is cleaved by ADAM17 to yield a membrane-associated intermediate fragment called notch extracellular truncation (NEXT). Following endocytosis, this fragment is then cleaved by one of the catalytic subunits of gamma-secretase (PSEN1 or PSEN2) to release a Notch-derived peptide containing the intracellular domain (NICD) from the membrane. In terms of processing, phosphorylated. Post-translationally, O-linked glycosylation by GALNT11 is involved in determination of left/right symmetry: glycosylation promotes activation of NOTCH1, possibly by promoting cleavage by ADAM17, modulating the balance between motile and immotile (sensory) cilia at the left-right organiser (LRO). O-glycosylated on the EGF-like domains. O-glucosylated at Ser-451 by KDELC1 and KDELC2. Contains both O-linked fucose and O-linked glucose in the EGF-like domains 11, 12 and 13, which are interacting with the residues on DLL4. MFNG-, RFNG- and LFNG-mediated modification of O-fucose residues at specific EGF-like domains results in inhibition of its activation by JAG1 and enhancement of its activation by DLL1 via an increased binding to DLL1. Ubiquitinated. Undergoes 'Lys-29'-linked polyubiquitination by ITCH; promotes the lysosomal degradation of non-activated internalized NOTCH1. Deubiquitination by USP12 is required for transport of internalized non-activated receptor from late endosomes to lysosomes for degradation. Monoubiquitination at Lys-1765 is required for activation by gamma-secretase cleavage, it promotes interaction with AAK1, which stabilizes it. Deubiquitination by EIF3F is necessary for nuclear import of activated Notch. In terms of processing, hydroxylated at Asn-1961 by HIF1AN. Hydroxylated at Asn-2028 by HIF1AN. Hydroxylation reduces affinity for HI1AN and may thus indirectly modulate negative regulation of NICD.

The protein resides in the cell membrane. It localises to the late endosome membrane. The protein localises to the nucleus. Its function is as follows. Functions as a receptor for membrane-bound ligands Jagged-1 (JAG1), Jagged-2 (JAG2) and Delta-1 (DLL1) to regulate cell-fate determination. Upon ligand activation through the released notch intracellular domain (NICD) it forms a transcriptional activator complex with RBPJ/RBPSUH and activates genes of the enhancer of split locus. Affects the implementation of differentiation, proliferation and apoptotic programs. Involved in angiogenesis; negatively regulates endothelial cell proliferation and migration and angiogenic sprouting. Involved in the maturation of both CD4(+) and CD8(+) cells in the thymus. Important for follicular differentiation and possibly cell fate selection within the follicle. During cerebellar development, functions as a receptor for neuronal DNER and is involved in the differentiation of Bergmann glia. Represses neuronal and myogenic differentiation. May play an essential role in postimplantation development, probably in some aspect of cell specification and/or differentiation. May be involved in mesoderm development, somite formation and neurogenesis. May enhance HIF1A function by sequestering HIF1AN away from HIF1A. Required for the THBS4 function in regulating protective astrogenesis from the subventricular zone (SVZ) niche after injury. Involved in determination of left/right symmetry by modulating the balance between motile and immotile (sensory) cilia at the left-right organiser (LRO). The chain is Neurogenic locus notch homolog protein 1 (NOTCH1) from Cricetulus griseus (Chinese hamster).